Here is a 706-residue protein sequence, read N- to C-terminus: Transferrin-binding protein B (706 aa).

Residues 1–20 (MKHIPLTTLCVAISAVLLTA) form the signal peptide. Cysteine 21 is lipidated: N-palmitoyl cysteine. A lipid anchor (S-diacylglycerol cysteine) is attached at cysteine 21. 2 disordered regions span residues 26–92 (GSNP…KEQV) and 384–412 (GSAI…LEGG). Gly residues predominate over residues 42–51 (GNTGNTGNAG). The segment covering 389–410 (SDKEKDSETKHPFTSDAKDRLE) has biased composition (basic and acidic residues).

Belongs to the TbpB family.

It localises to the cell outer membrane. It is found in the cell surface. Its function is as follows. Moraxella acquires iron by extracting it from serum transferrin (TF) in its human host. Acts as a transferrin receptor and is required for transferrin utilization. This is Transferrin-binding protein B from Moraxella catarrhalis (Branhamella catarrhalis).